A 148-amino-acid polypeptide reads, in one-letter code: Putative nickel-responsive regulator (148 aa).

Residues H77, H88, H90, and C96 each coordinate Ni(2+).

Belongs to the transcriptional regulatory CopG/NikR family. It depends on Ni(2+) as a cofactor.

Its function is as follows. Transcriptional regulator. The protein is Putative nickel-responsive regulator of Bradyrhizobium diazoefficiens (strain JCM 10833 / BCRC 13528 / IAM 13628 / NBRC 14792 / USDA 110).